The primary structure comprises 253 residues: Major prion protein (253 aa).

The N-terminal stretch at 1–22 (MANLGCWMLVLFVATWSDLGLC) is a signal peptide. The tract at residues 23-38 (KKRPKPGGWNTGGSRY) is interaction with ADGRG6. Residues 23-230 (KKRPKPGGWN…ESQAYYQRGS (208 aa)) are interaction with GRB2, ERI3 and SYN1. Residues 26-108 (PKPGGWNTGG…WNKPSKPKTN (83 aa)) form a disordered region. Repeat copies occupy residues 51 to 59 (PQGGGGWGQ), 60 to 67 (PHGGGWGQ), 68 to 75 (PHGGGWGQ), 76 to 83 (PHGGGWGQ), and 84 to 91 (PHGGGWGQ). Positions 51–91 (PQGGGGWGQPHGGGWGQPHGGGWGQPHGGGWGQPHGGGWGQ) are 5 X 8 AA tandem repeats of P-H-G-G-G-W-G-Q. A compositionally biased stretch (gly residues) spans 52–95 (QGGGGWGQPHGGGWGQPHGGGWGQPHGGGWGQPHGGGWGQGGGT). Residues His61, Gly62, Gly63, His69, Gly70, Gly71, His77, Gly78, Gly79, His85, Gly86, and Gly87 each contribute to the Cu(2+) site. Cys179 and Cys214 are disulfide-bonded. 2 N-linked (GlcNAc...) asparagine glycosylation sites follow: Asn181 and Asn197. Ser230 carries the GPI-anchor amidated serine lipid modification. Residues 231-253 (SMVLFSSPPVILLISFLIFLIVG) constitute a propeptide, removed in mature form.

Belongs to the prion family. As to quaternary structure, monomer and homodimer. Has a tendency to aggregate into amyloid fibrils containing a cross-beta spine, formed by a steric zipper of superposed beta-strands. Soluble oligomers may represent an intermediate stage on the path to fibril formation. Copper binding may promote oligomerization. Interacts with GRB2, APP, ERI3/PRNPIP and SYN1. Mislocalized cytosolically exposed PrP interacts with MGRN1; this interaction alters MGRN1 subcellular location and causes lysosomal enlargement. Interacts with KIAA1191. Interacts with ADGRG6. In terms of processing, the glycosylation pattern (the amount of mono-, di- and non-glycosylated forms or glycoforms) seems to differ in normal and CJD prion.

It localises to the cell membrane. The protein resides in the golgi apparatus. In terms of biological role, its primary physiological function is unclear. May play a role in neuronal development and synaptic plasticity. May be required for neuronal myelin sheath maintenance. May promote myelin homeostasis through acting as an agonist for ADGRG6 receptor. May play a role in iron uptake and iron homeostasis. Soluble oligomers are toxic to cultured neuroblastoma cells and induce apoptosis (in vitro). Association with GPC1 (via its heparan sulfate chains) targets PRNP to lipid rafts. Also provides Cu(2+) or Zn(2+) for the ascorbate-mediated GPC1 deaminase degradation of its heparan sulfate side chains. The protein is Major prion protein (PRNP) of Homo sapiens (Human).